Consider the following 130-residue polypeptide: Glycine cleavage system H protein (130 aa).

Residues 24-106 (TVTIGITDHA…YDDGWFFKVK (83 aa)) form the Lipoyl-binding domain. Lysine 65 is subject to N6-lipoyllysine.

Belongs to the GcvH family. In terms of assembly, the glycine cleavage system is composed of four proteins: P, T, L and H. The cofactor is (R)-lipoate.

In terms of biological role, the glycine cleavage system catalyzes the degradation of glycine. The H protein shuttles the methylamine group of glycine from the P protein to the T protein. The protein is Glycine cleavage system H protein of Saccharophagus degradans (strain 2-40 / ATCC 43961 / DSM 17024).